An 893-amino-acid polypeptide reads, in one-letter code: ATPase family gene 2 protein homolog A (893 aa).

Residues 1–10 (MSSKKNRKRL) are compositionally biased toward basic residues. A disordered region spans residues 1–26 (MSSKKNRKRLNQSAENGSSLPSAASS). The required for interaction with AFG2B and CINP stretch occupies residues 1 to 237 (MSSKKNRKRL…SLELSLQLSQ (237 aa)). Residues 11 to 25 (NQSAENGSSLPSAAS) are compositionally biased toward polar residues. Threonine 272 is subject to Phosphothreonine. 2 positions are modified to phosphoserine: serine 274 and serine 279. ATP contacts are provided by residues 394 to 401 (GPPGTGKT) and 668 to 675 (GPPGCSKT). A Glycyl lysine isopeptide (Lys-Gly) (interchain with G-Cter in SUMO2) cross-link involves residue lysine 859.

Belongs to the AAA ATPase family. AFG2 subfamily. In terms of assembly, part of the 55LCC heterohexameric ATPase complex composed at least of AIRIM, AFG2A, AFG2B and CINP. Associates with pre-60S ribosomal particles.

It is found in the cytoplasm. It localises to the mitochondrion. The protein localises to the cytoskeleton. Its subcellular location is the spindle. It catalyses the reaction ATP + H2O = ADP + phosphate + H(+). AFG2A alone display limited ATPase activity and is not regulated by RNA or DNA binding. In the context of 55LCC heterohexameric ATPase complex, the ATPase activity increases and is stimulated by DNA binding and inhibited in presence of RNA. ATP-dependent chaperone part of the 55LCC heterohexameric ATPase complex which is chromatin-associated and promotes replisome proteostasis to maintain replication fork progression and genome stability. Required for replication fork progression, sister chromatid cohesion, and chromosome stability. The ATPase activity is specifically enhanced by replication fork DNA and is coupled to cysteine protease-dependent cleavage of replisome substrates in response to replication fork damage. Uses ATPase activity to process replisome substrates in S-phase, facilitating their proteolytic turnover from chromatin to ensure DNA replication and mitotic fidelity. Plays an essential role in the cytoplasmic maturation steps of pre-60S ribosomal particles by promoting the release of shuttling protein RSL24D1/RLP24 from the pre-ribosomal particles. May be involved in morphological and functional mitochondrial transformations during spermatogenesis. The polypeptide is ATPase family gene 2 protein homolog A (Homo sapiens (Human)).